A 215-amino-acid chain; its full sequence is Ribosomal RNA small subunit methyltransferase G (215 aa).

Residues Gly-71, Leu-76, and Arg-135 each contribute to the S-adenosyl-L-methionine site.

It belongs to the methyltransferase superfamily. RNA methyltransferase RsmG family.

It localises to the cytoplasm. Specifically methylates the N7 position of a guanine in 16S rRNA. The chain is Ribosomal RNA small subunit methyltransferase G from Salinibacter ruber (strain DSM 13855 / M31).